Here is a 467-residue protein sequence, read N- to C-terminus: Light-independent protochlorophyllide reductase subunit N (467 aa).

3 residues coordinate [4Fe-4S] cluster: Cys-24, Cys-49, and Cys-109.

It belongs to the BchN/ChlN family. Protochlorophyllide reductase is composed of three subunits; ChlL, ChlN and ChlB. Forms a heterotetramer of two ChlB and two ChlN subunits. The cofactor is [4Fe-4S] cluster.

The enzyme catalyses chlorophyllide a + oxidized 2[4Fe-4S]-[ferredoxin] + 2 ADP + 2 phosphate = protochlorophyllide a + reduced 2[4Fe-4S]-[ferredoxin] + 2 ATP + 2 H2O. The protein operates within porphyrin-containing compound metabolism; chlorophyll biosynthesis (light-independent). Functionally, component of the dark-operative protochlorophyllide reductase (DPOR) that uses Mg-ATP and reduced ferredoxin to reduce ring D of protochlorophyllide (Pchlide) to form chlorophyllide a (Chlide). This reaction is light-independent. The NB-protein (ChlN-ChlB) is the catalytic component of the complex. This is Light-independent protochlorophyllide reductase subunit N from Leptolyngbya boryana (Plectonema boryanum).